A 299-amino-acid chain; its full sequence is Tyrosine recombinase XerD (299 aa).

The Core-binding (CB) domain maps to 3–88 (QQDNPLIEQF…AMRRLFQYLY (86 aa)). Positions 109 to 293 (RLPKDLSEAQ…ATERLRQLHQ (185 aa)) constitute a Tyr recombinase domain. Catalysis depends on residues R149, K173, H245, R248, and H271. The active-site O-(3'-phospho-DNA)-tyrosine intermediate is the Y280.

The protein belongs to the 'phage' integrase family. XerD subfamily. Forms a cyclic heterotetrameric complex composed of two molecules of XerC and two molecules of XerD, in which XerC interacts with XerD via its C-terminal region, XerD interacts with XerC via its C-terminal region and so on.

The protein resides in the cytoplasm. Its activity is regulated as follows. FtsK may regulate the catalytic switch between XerC and XerD in the heterotetrameric complex during the two steps of the recombination process. Functionally, site-specific tyrosine recombinase, which acts by catalyzing the cutting and rejoining of the recombining DNA molecules. Binds cooperatively to specific DNA consensus sequences that are separated from XerC binding sites by a short central region, forming the heterotetrameric XerC-XerD complex that recombines DNA substrates. The complex is essential to convert dimers of the bacterial chromosome into monomers to permit their segregation at cell division. It also contributes to the segregational stability of plasmids. In the complex XerD specifically exchanges the bottom DNA strands. This chain is Tyrosine recombinase XerD, found in Yersinia pestis.